The chain runs to 154 residues: 6,7-dimethyl-8-ribityllumazine synthase (154 aa).

5-amino-6-(D-ribitylamino)uracil-binding positions include Phe-22, 56-58, and 81-83; these read AFE and VLI. 86–87 is a (2S)-2-hydroxy-3-oxobutyl phosphate binding site; that stretch reads ET. His-89 (proton donor) is an active-site residue. Phe-114 provides a ligand contact to 5-amino-6-(D-ribitylamino)uracil. A (2S)-2-hydroxy-3-oxobutyl phosphate-binding site is contributed by Arg-128.

This sequence belongs to the DMRL synthase family.

The catalysed reaction is (2S)-2-hydroxy-3-oxobutyl phosphate + 5-amino-6-(D-ribitylamino)uracil = 6,7-dimethyl-8-(1-D-ribityl)lumazine + phosphate + 2 H2O + H(+). The protein operates within cofactor biosynthesis; riboflavin biosynthesis; riboflavin from 2-hydroxy-3-oxobutyl phosphate and 5-amino-6-(D-ribitylamino)uracil: step 1/2. Its function is as follows. Catalyzes the formation of 6,7-dimethyl-8-ribityllumazine by condensation of 5-amino-6-(D-ribitylamino)uracil with 3,4-dihydroxy-2-butanone 4-phosphate. This is the penultimate step in the biosynthesis of riboflavin. The polypeptide is 6,7-dimethyl-8-ribityllumazine synthase (Chlamydia abortus (strain DSM 27085 / S26/3) (Chlamydophila abortus)).